The sequence spans 197 residues: MSIYAFEGVIPVVHPTAYIHPSAVLIGDVIIGAGVYIGPLASLRGDYGRLIVEAGANLQDGCVMHGYTDMDTIVQENGHIGHGAILHSCIIGRDSLVGMNSVIMDGAIIGEESIVAAMSFVKAGFQGQARQMLMGSPAKHVRDISDQDMQWKRMNTREYQDLTVRCRQGLVETTPLTAPEANRPRLRGTTEVKPKGQ.

A disordered region spans residues 177–197; sequence TAPEANRPRLRGTTEVKPKGQ. Positions 188–197 are enriched in basic and acidic residues; sequence GTTEVKPKGQ.

This sequence belongs to the transferase hexapeptide repeat family.

Its pathway is amine and polyamine metabolism; carnitine metabolism. Its function is as follows. Overproduction of CaiE stimulates the activity of CaiB and CaiD. The polypeptide is Carnitine operon protein CaiE (Proteus sp. (strain LE138)).